A 353-amino-acid chain; its full sequence is Inactive ADP-ribosyltransferase ARH2 (353 aa).

The residue at position 27 (serine 27) is a Phosphoserine.

The protein belongs to the ADP-ribosylglycohydrolase family.

It is found in the cytoplasm. It localises to the myofibril. The protein resides in the sarcomere. Functionally, required for myofibril assembly and outgrowth of the cardiac chambers in the developing heart. Appears to be catalytically inactive, showing no activity against O-acetyl-ADP-ribose. This Rattus norvegicus (Rat) protein is Inactive ADP-ribosyltransferase ARH2 (Adprhl1).